The chain runs to 448 residues: Glutamyl-tRNA reductase (448 aa).

Residues 49–52 (TCNR), Ser109, 114–116 (ETQ), and Gln120 contribute to the substrate site. Residue Cys50 is the Nucleophile of the active site. 189–194 (GAGEMS) contacts NADP(+).

This sequence belongs to the glutamyl-tRNA reductase family. Homodimer.

It carries out the reaction (S)-4-amino-5-oxopentanoate + tRNA(Glu) + NADP(+) = L-glutamyl-tRNA(Glu) + NADPH + H(+). The protein operates within porphyrin-containing compound metabolism; protoporphyrin-IX biosynthesis; 5-aminolevulinate from L-glutamyl-tRNA(Glu): step 1/2. Functionally, catalyzes the NADPH-dependent reduction of glutamyl-tRNA(Glu) to glutamate 1-semialdehyde (GSA). In Staphylococcus aureus (strain MRSA252), this protein is Glutamyl-tRNA reductase.